Here is a 415-residue protein sequence, read N- to C-terminus: Prostacyclin receptor (415 aa).

Positions 1–21 (MMASDGHPGPPSVTPGSPLSA) are disordered. The Extracellular portion of the chain corresponds to 1–44 (MMASDGHPGPPSVTPGSPLSAGGREWQGMAGSCWNITYVQDSVG). Intrachain disulfides connect C33/C193 and C120/C198. Residue N35 is glycosylated (N-linked (GlcNAc...) asparagine). The chain crosses the membrane as a helical span at residues 45 to 66 (PATSTLMFVAGVVGNGLALGIL). Topologically, residues 67 to 79 (GARRRSHPSAFAV) are cytoplasmic. A helical membrane pass occupies residues 80 to 104 (LVTGLAVTDLLGTCFLSPAVFVAYA). Topologically, residues 105 to 122 (RNSSLLGLAHGGTMLCDT) are extracellular. Residues 123-143 (FAFAMTFFGLASTLILFAMAV) traverse the membrane as a helical segment. Residues 144–162 (ERCLALSHPYLYAQLDGPR) are Cytoplasmic-facing. Residues 163–186 (CARFALPSIYAFCCLFCSLPLLGL) form a helical membrane-spanning segment. The Extracellular segment spans residues 187-215 (GEHQQYCPGSWCFIRMRSAQPGGCAFSLA). A helical transmembrane segment spans residues 216-236 (YASLMALLVTSIFFCNGSVTL). Topologically, residues 237–263 (SLYHMYRQQRRHHGSFVPTSRAREDEV) are cytoplasmic. Residues 264 to 288 (YHLILLALMTVIMAVCSLPLMIRGF) traverse the membrane as a helical segment. Topologically, residues 289-301 (TQAIAPDSREMGD) are extracellular. Residues 302 to 322 (LLAFRFNAFNPILDPWVFILF) form a helical membrane-spanning segment. Over 323-415 (RKAVFQRLKF…SEAIAACSLC (93 aa)) the chain is Cytoplasmic. The interval 349–370 (PLSRPASGRRDPPAPTSLQAKE) is disordered. Position 365 is a phosphoserine (S365). Cysteine methyl ester is present on C412. The S-farnesyl cysteine moiety is linked to residue C412. Residues 413-415 (SLC) constitute a propeptide, removed in mature form.

Belongs to the G-protein coupled receptor 1 family. As to quaternary structure, interacts (non-isoprenylated C-terminus) with PDZK1. Post-translationally, isoprenylation does not influence ligand binding but is required for efficient coupling to the effectors adenylyl cyclase and phospholipase C.

Its subcellular location is the cell membrane. Functionally, receptor for prostacyclin (prostaglandin I2 or PGI2). The activity of this receptor is mediated by G(s) proteins which activate adenylate cyclase. The chain is Prostacyclin receptor (Ptgir) from Mus musculus (Mouse).